The chain runs to 283 residues: Protoheme IX farnesyltransferase (283 aa).

Helical transmembrane passes span 13–33, 35–55, 90–110, 156–176, 208–228, 230–250, and 262–282; these read ISSVVTLSAFAGFLIGSPTGL, GGTLLWTMLGTALCAGGVGTL, ILLVCLAVGLLCPLVNVLTAV, LGAGGWATFGILATWQMPHFL, MIGFAALLVPVSVLPVLTEAA, WIYGVGVVPLGLWFLWTTIVF, and VLKASVLYIPGLVALLLVDWF.

Belongs to the UbiA prenyltransferase family. Protoheme IX farnesyltransferase subfamily.

Its subcellular location is the cell inner membrane. It carries out the reaction heme b + (2E,6E)-farnesyl diphosphate + H2O = Fe(II)-heme o + diphosphate. Its pathway is porphyrin-containing compound metabolism; heme O biosynthesis; heme O from protoheme: step 1/1. Converts heme B (protoheme IX) to heme O by substitution of the vinyl group on carbon 2 of heme B porphyrin ring with a hydroxyethyl farnesyl side group. In Salinibacter ruber (strain DSM 13855 / M31), this protein is Protoheme IX farnesyltransferase.